Here is a 310-residue protein sequence, read N- to C-terminus: Bifunctional protein FolD 3, chloroplastic (310 aa).

A chloroplast-targeting transit peptide spans 1 to 48; the sequence is MFTDCSSSTTSRLIHLYNRNGVFLPRPSVSQFSLRTTASTWRCTLSIR.

The protein belongs to the tetrahydrofolate dehydrogenase/cyclohydrolase family. Homodimer.

It localises to the plastid. It is found in the chloroplast. It catalyses the reaction (6R)-5,10-methylene-5,6,7,8-tetrahydrofolate + NADP(+) = (6R)-5,10-methenyltetrahydrofolate + NADPH. It carries out the reaction (6R)-5,10-methenyltetrahydrofolate + H2O = (6R)-10-formyltetrahydrofolate + H(+). The protein operates within one-carbon metabolism; tetrahydrofolate interconversion. Catalyzes the oxidation of 5,10-methylenetetrahydrofolate to 5,10-methenyltetrahydrofolate and then the hydrolysis of 5,10-methenyltetrahydrofolate to 10-formyltetrahydrofolate. The polypeptide is Bifunctional protein FolD 3, chloroplastic (FOLD3) (Arabidopsis thaliana (Mouse-ear cress)).